Reading from the N-terminus, the 181-residue chain is Large ribosomal subunit protein uL6 (181 aa).

Belongs to the universal ribosomal protein uL6 family. As to quaternary structure, part of the 50S ribosomal subunit.

In terms of biological role, this protein binds to the 23S rRNA, and is important in its secondary structure. It is located near the subunit interface in the base of the L7/L12 stalk, and near the tRNA binding site of the peptidyltransferase center. In Coprothermobacter proteolyticus (strain ATCC 35245 / DSM 5265 / OCM 4 / BT), this protein is Large ribosomal subunit protein uL6.